Here is a 542-residue protein sequence, read N- to C-terminus: 4-coumarate--CoA ligase 2 (542 aa).

Residues Ser-189, Ser-190, Gly-191, Thr-192, Thr-193, and Lys-197 each coordinate ATP. (E)-4-coumaroyl-AMP is bound by residues Tyr-239 and Ser-243. (E)-caffeoyl-AMP-binding residues include Tyr-239 and Ser-243. Residues Tyr-239 and Ser-243 each contribute to the (E)-feruloyl-AMP site. Lys-260 serves as a coordination point for CoA. The segment at 262–331 (DIVSFLELIQ…AKFPNAKLGQ (70 aa)) is SBD1. Ala-309 is a binding site for (E)-4-coumaroyl-AMP. Ala-309 lines the (E)-caffeoyl-AMP pocket. Ala-309 provides a ligand contact to (E)-feruloyl-AMP. ATP-binding residues include Gln-331, Gly-332, and Thr-336. Residues Gly-332, Thr-336, Met-344, Asp-420, Arg-435, Lys-437, and Lys-441 each contribute to the (E)-4-coumaroyl-AMP site. The (E)-caffeoyl-AMP site is built by Gly-332, Thr-336, Met-344, Asp-420, Arg-435, Lys-437, and Lys-441. Residues Gly-332, Thr-336, Met-344, Asp-420, Arg-435, Lys-437, and Lys-441 each coordinate (E)-feruloyl-AMP. AMP is bound by residues Gly-332 and Thr-336. Residues 332–399 (GYGMTEAGPV…IRGDQIMKGY (68 aa)) form an SBD2 region. The ATP site is built by Asp-420 and Arg-435. Asp-420 contacts AMP. AMP is bound by residues Lys-437 and Lys-441. Residues Lys-443 and Gly-444 each coordinate CoA. Gln-446 contacts AMP. Residue Lys-526 participates in ATP binding.

This sequence belongs to the ATP-dependent AMP-binding enzyme family. Mg(2+) is required as a cofactor. Mainly expressed in old stems and, to a lower extent, in flowers (e.g. in ovary), leaves, young stems, shoot tips and patel limbs.

The enzyme catalyses (E)-4-coumarate + ATP + CoA = (E)-4-coumaroyl-CoA + AMP + diphosphate. It catalyses the reaction (E)-caffeate + ATP + CoA = (E)-caffeoyl-CoA + AMP + diphosphate. The catalysed reaction is (E)-ferulate + ATP + CoA = (E)-feruloyl-CoA + AMP + diphosphate. It carries out the reaction (E)-cinnamate + ATP + CoA = (E)-cinnamoyl-CoA + AMP + diphosphate. The enzyme catalyses (E)-4-coumarate + ATP + H(+) = (E)-4-coumaroyl-AMP + diphosphate. It catalyses the reaction (E)-4-coumaroyl-AMP + CoA = (E)-4-coumaroyl-CoA + AMP + H(+). The catalysed reaction is (E)-caffeate + ATP + H(+) = (E)-caffeoyl-AMP + diphosphate. It carries out the reaction (E)-caffeoyl-AMP + CoA = (E)-caffeoyl-CoA + AMP + H(+). The enzyme catalyses (E)-ferulate + ATP + H(+) = (E)-feruloyl-AMP + diphosphate. It catalyses the reaction (E)-feruloyl-AMP + CoA = (E)-feruloyl-CoA + AMP + H(+). Its pathway is phytoalexin biosynthesis; 3,4',5-trihydroxystilbene biosynthesis; 3,4',5-trihydroxystilbene from trans-4-coumarate: step 1/2. Functionally, major enzyme of the phenylpropanoid pathway that mediates the production of several precursors for numerous metabolites and regulates carbon flow. Catalyzes the formation of CoA thioesters using 4-coumarate, ferulate, caffeate, and cinnamate as substrates. Follows a two-step reaction mechanism, wherein a (hydroxy)cinnamate substrate first undergoes adenylation by ATP leading to an acyl-AMP, followed by a thioesterification in the presence of CoA to yield the final (hydroxy)cinnamoyl-CoA product. Almost inactive toward sinapate. The sequence is that of 4-coumarate--CoA ligase 2 from Nicotiana tabacum (Common tobacco).